We begin with the raw amino-acid sequence, 771 residues long: Protein translocase subunit SecA 2 (771 aa).

ATP is bound by residues Gln91, 109–113 (GEGKT), and Asp496.

Belongs to the SecA family. In terms of assembly, monomer and homodimer. Part of the essential Sec protein translocation apparatus which comprises SecA, SecYEG and auxiliary proteins SecDF. Other proteins may also be involved.

It localises to the cell membrane. The protein localises to the cytoplasm. The enzyme catalyses ATP + H2O + cellular proteinSide 1 = ADP + phosphate + cellular proteinSide 2.. Part of the Sec protein translocase complex. Interacts with the SecYEG preprotein conducting channel. Has a central role in coupling the hydrolysis of ATP to the transfer of proteins into and across the cell membrane, serving as an ATP-driven molecular motor driving the stepwise translocation of polypeptide chains across the membrane. The polypeptide is Protein translocase subunit SecA 2 (Corynebacterium jeikeium (strain K411)).